The chain runs to 610 residues: Myoneurin (610 aa).

Positions 24–89 (CDCTVVIGEF…IYTGTLNLDS (66 aa)) constitute a BTB domain. Residues 156 to 199 (SEVSTDSVQANPKPRALTKKSSQSKKKKKAFSSQKPGQSKAVQY) form a disordered region. Residues 171–185 (ALTKKSSQSKKKKKA) show a composition bias toward basic residues. 2 short sequence motifs (nuclear localization signal) span residues 174 to 190 (KKSS…SSQK) and 257 to 262 (KRKRRK). 8 consecutive C2H2-type zinc fingers follow at residues 302–324 (PMCN…MRIH), 330–352 (YVCH…VRTH), 358–381 (YKCE…RMHH), 387–409 (YKCD…ARKH), 415–437 (YVCD…VRRH), 443–465 (YVCD…SRKH), 471–493 (YICG…FRSH), and 499–522 (FICE…TKVH). Residues 519–548 (TKVHSGTDKNPDCSVDDHAVSEQDSVQRSP) are disordered. A compositionally biased stretch (basic and acidic residues) spans 523–539 (SGTDKNPDCSVDDHAVS).

The protein belongs to the krueppel C2H2-type zinc-finger protein family. As to expression, mainly expressed in the neuromuscular system. Located in and around synaptic myonuclei in adult muscle. Expression is dysregulated after nerve injury. Also found in the cerebellum, testis, heart, brain and liver.

The protein localises to the nucleus. This chain is Myoneurin (Mynn), found in Mus musculus (Mouse).